Consider the following 370-residue polypeptide: Selenide, water dikinase 2 (370 aa).

Residue Sec24 is part of the active site. A non-standard amino acid (selenocysteine) is located at residue Sec24. ATP-binding positions include Lys27, 55-57, Asp76, and Asp99; that span reads GMD. Residue Asp57 coordinates Mg(2+). Mg(2+)-binding residues include Asp99 and Asp258.

It belongs to the selenophosphate synthase 1 family. Class I subfamily. As to quaternary structure, homodimer. Mg(2+) serves as cofactor. First expressed in the midgut anlagen with subsequent expression in a variety of tissues including the gut and nervous system.

It carries out the reaction hydrogenselenide + ATP + H2O = selenophosphate + AMP + phosphate + 2 H(+). Functionally, synthesizes selenophosphate from selenide and ATP. The polypeptide is Selenide, water dikinase 2 (Sps2) (Drosophila melanogaster (Fruit fly)).